The sequence spans 72 residues: Translation initiation factor IF-1 (72 aa).

The S1-like domain maps to 1–72 (MAKEEVLEFP…TKGRITYRLK (72 aa)).

It belongs to the IF-1 family. As to quaternary structure, component of the 30S ribosomal translation pre-initiation complex which assembles on the 30S ribosome in the order IF-2 and IF-3, IF-1 and N-formylmethionyl-tRNA(fMet); mRNA recruitment can occur at any time during PIC assembly.

The protein localises to the cytoplasm. Functionally, one of the essential components for the initiation of protein synthesis. Stabilizes the binding of IF-2 and IF-3 on the 30S subunit to which N-formylmethionyl-tRNA(fMet) subsequently binds. Helps modulate mRNA selection, yielding the 30S pre-initiation complex (PIC). Upon addition of the 50S ribosomal subunit IF-1, IF-2 and IF-3 are released leaving the mature 70S translation initiation complex. This is Translation initiation factor IF-1 from Brucella suis biovar 1 (strain 1330).